Here is a 313-residue protein sequence, read N- to C-terminus: Intelectin-1 (313 aa).

A signal peptide spans 1-18; that stretch reads MNQLSFLLFLIATTRGWS. Positions 32-255 constitute a Fibrinogen C-terminal domain; it reads SSSPSLPRSC…AANALCAGMR (224 aa). An intrachain disulfide couples Cys-41 to Cys-70. Positions 86, 87, 89, 92, 97, 98, and 133 each coordinate Ca(2+). Disulfide bonds link Cys-94–Cys-280, Cys-199–Cys-259, and Cys-251–Cys-265. Asn-163 carries an N-linked (GlcNAc...) asparagine glycan. Ca(2+) is bound by residues Asn-260, Glu-262, Glu-274, and Asp-282. Residues 262 to 263 and Glu-274 contribute to the a carbohydrate site; that span reads EH. Ser-298 carries GPI-anchor amidated serine lipidation. Residues 299-313 constitute a propeptide that is removed on maturation; the sequence is SSREITEAAVLLFYR.

Homotrimer; disulfide-linked. May interact with LTF. N-glycosylated. Highly expressed in omental adipose tissue where it is found in stromal vascular cells but not in fat cells but is barely detectable in subcutaneous adipose tissue (at protein level). Highly expressed in the small intestine. Also found in the heart, testis, colon, salivary gland, skeletal muscle, pancreas and thyroid and, to a lesser degree, in the uterus, spleen, prostate, lymph node and thymus.

It is found in the cell membrane. Its subcellular location is the secreted. Functionally, lectin that specifically recognizes microbial carbohydrate chains in a calcium-dependent manner. Binds to microbial glycans that contain a terminal acyclic 1,2-diol moiety, including beta-linked D-galactofuranose (beta-Galf), D-phosphoglycerol-modified glycans, D-glycero-D-talo-oct-2-ulosonic acid (KO) and 3-deoxy-D-manno-oct-2-ulosonic acid (KDO). Binds to glycans from Gram-positive and Gram-negative bacteria, including K.pneumoniae, S.pneumoniae, Y.pestis, P.mirabilis and P.vulgaris. Does not bind human glycans. Probably plays a role in the defense system against microorganisms. May function as adipokine that has no effect on basal glucose uptake but enhances insulin-stimulated glucose uptake in adipocytes. Increases AKT phosphorylation in the absence and presence of insulin. May interact with lactoferrin/LTF and increase its uptake, and may thereby play a role in iron absorption. The protein is Intelectin-1 (ITLN1) of Homo sapiens (Human).